Consider the following 194-residue polypeptide: dCTP deaminase (194 aa).

DCTP contacts are provided by residues 110–115, Asp128, 136–138, Tyr171, Lys178, and Gln182; these read RSSLAR and VLE. Catalysis depends on Glu138, which acts as the Proton donor/acceptor. The disordered stretch occupies residues 173-194; sequence SRQDAKYKNQQSAVASRINQDR. Residues 180–194 show a composition bias toward polar residues; that stretch reads KNQQSAVASRINQDR.

This sequence belongs to the dCTP deaminase family. As to quaternary structure, homotrimer.

It carries out the reaction dCTP + H2O + H(+) = dUTP + NH4(+). The protein operates within pyrimidine metabolism; dUMP biosynthesis; dUMP from dCTP (dUTP route): step 1/2. Its function is as follows. Catalyzes the deamination of dCTP to dUTP. In Actinobacillus succinogenes (strain ATCC 55618 / DSM 22257 / CCUG 43843 / 130Z), this protein is dCTP deaminase.